The chain runs to 246 residues: Probable septum site-determining protein MinC (246 aa).

Positions 116 to 140 are disordered; it reads AAVSPPPPPPARAEPAPPAARPAPG. Over residues 119–136 the composition is skewed to pro residues; the sequence is SPPPPPPARAEPAPPAAR.

This sequence belongs to the MinC family. Interacts with MinD and FtsZ.

Cell division inhibitor that blocks the formation of polar Z ring septums. Rapidly oscillates between the poles of the cell to destabilize FtsZ filaments that have formed before they mature into polar Z rings. Prevents FtsZ polymerization. This chain is Probable septum site-determining protein MinC, found in Xanthomonas oryzae pv. oryzae (strain MAFF 311018).